Here is a 449-residue protein sequence, read N- to C-terminus: Amidophosphoribosyltransferase (449 aa).

The propeptide occupies 1-9; it reads MRGEIMKEK. Cys-10 serves as the catalytic Nucleophile. The 215-residue stretch at 10-224 folds into the Glutamine amidotransferase type-2 domain; it reads CGIFGAYSQD…PGEVIVVKDG (215 aa). Cys-239 provides a ligand contact to [4Fe-4S] cluster. Residues Ser-286, Asp-346, and Asp-347 each coordinate Mg(2+). [4Fe-4S] cluster-binding residues include Cys-383, Cys-432, and Cys-435.

The protein in the C-terminal section; belongs to the purine/pyrimidine phosphoribosyltransferase family. Mg(2+) serves as cofactor. [4Fe-4S] cluster is required as a cofactor.

The enzyme catalyses 5-phospho-beta-D-ribosylamine + L-glutamate + diphosphate = 5-phospho-alpha-D-ribose 1-diphosphate + L-glutamine + H2O. It participates in purine metabolism; IMP biosynthesis via de novo pathway; N(1)-(5-phospho-D-ribosyl)glycinamide from 5-phospho-alpha-D-ribose 1-diphosphate: step 1/2. Functionally, catalyzes the formation of phosphoribosylamine from phosphoribosylpyrophosphate (PRPP) and glutamine. The sequence is that of Amidophosphoribosyltransferase from Pyrococcus horikoshii (strain ATCC 700860 / DSM 12428 / JCM 9974 / NBRC 100139 / OT-3).